The sequence spans 623 residues: Riboflavin biosynthesis protein PYRR, chloroplastic (623 aa).

The N-terminal 45 residues, 1–45 (MPLPQPLLGGASPAPARAASSFLHPLLHTRHRVSTAPAAASSFVP), are a transit peptide targeting the chloroplast. Positions 52–181 (ANDAMLLRRA…ALRNEGIQVD (130 aa)) constitute a CMP/dCMP-type deaminase domain.

This sequence in the C-terminal section; belongs to the YbiA family.

The protein localises to the plastid. Its subcellular location is the chloroplast. The catalysed reaction is 5-amino-6-(5-phospho-D-ribitylamino)uracil + NADP(+) = 5-amino-6-(5-phospho-D-ribosylamino)uracil + NADPH + H(+). The enzyme catalyses 2,5-diamino-6-hydroxy-4-(5-phosphoribosylamino)-pyrimidine + H2O = 2,5,6-triamino-4-hydroxypyrimidine + D-ribose 5-phosphate. It catalyses the reaction 5-amino-6-(5-phospho-D-ribosylamino)uracil + H2O = 5,6-diaminouracil + D-ribose 5-phosphate. It participates in cofactor biosynthesis; riboflavin biosynthesis; 5-amino-6-(D-ribitylamino)uracil from GTP: step 3/4. Pyrimidine reductase involved in the riboflavin biosynthesis pathway. Also has a non-functional N-terminal deaminase domain that lacks the catalytically essential zinc-binding residues. 39% activity when NADH replaces NADPH. No evidence for a phosphatase activity conferred by the N-terminal domain. Functionally, catalyzes the hydrolysis of the N-glycosidic bond in the first two intermediates of riboflavin biosynthesis, which are highly reactive metabolites, yielding relatively innocuous products. Thus, can divert a surplus of harmful intermediates into relatively harmless products and pre-empt the damage these intermediates would otherwise do. Has no activity against GTP, nucleoside monophosphates or ADP-ribose. The sequence is that of Riboflavin biosynthesis protein PYRR, chloroplastic (PYRR) from Zea mays (Maize).